The sequence spans 1080 residues: MLKRLLSKLTGNRQQIEHHLKNQYQVEENGLSFPLSLVDDSQLWALASWLEQLAEEDYLISLTDRWLLSWDALYRLLEDEEHASSLPLIGVPDVLPLRASLSSRGALSDSDFRVWIAEWATLPARKPIRFSRTGAILTHENQQYLLSRENWALLQATEQLSAQKNQTPGETTNQLGWAAIRKCAKQAAAKFDDYLEKTHVVKPTSLSLRLRKATVADTAVIEIEPHFEDQPANWLGSFDKNSQVHDSYRIPGENGELSHVIIPPEVKEVLNSIHSIPSRRVAGSEALSFVRNPYTFLGEDAASVIAPEEHEQALFDARIFFHHFRLIPQLNAENKIAEVTLVLEPVSPVPQPEITFGFSAPRELDKFIQQLGISVAAQMPAGSWQGYELELSQFTEQQWHDCQALLTRWQQEIEGKEFSDVLDIAKYGDRVIGIGEFEKISSPWLTKAQSENWLPDDIDFSAFSVETLSGWQPENLHHFDELQERITQAEAVGETHITAPWNDSQLPLDAAKTFSKNWEKQQSTANESQGNVADKTARAVLKIEQNIEETAYIKQRRNSLLNARHAEPEIPLSLKEHIRLKDHQREGVAWLQQLFLRSPEETAGCLLADDMGLGKTLQILSFLVWFIEKFPQEPPSLIVAPVSLLDNWERELDNFFYTAGIPVLKLYGETIKAVKYPKQAIPAHLQSQGIKNLLKPGWQGEAKIILTTYETLRDQEFSLARQPWSIMVCDEAQKIKNPAALITHAANAVQARFKVACTGTPVENTLVDLWSLFDFAQPGLLGALNEFGKHYVRPIENEDGRDTERLESLRALIEPQTLRRTKEEVARDLPQKIEVESCKQLTLSGVQKQLYLSSVANWQQQQALSEGMQQAGTGMLGLLHRLKLICAHPAVVNPEPRFRDNSPKLNWLLKILAELKHTTKDKVIIFTELRDLQRELQHAIHQKFGFRPVIINGDTSTKSQSQNSRQRLIDDFQAQPGFGVIILSTVAVGFGVNVQKANHVIHFTRCWNPAKEDQATDRAYRIGQTKDVYVYYPTVKDTEITTFEETLDDLLQRRRALARDMLCATPDLSGADFEAILKGA.

The 184-residue stretch at L596 to G779 folds into the Helicase ATP-binding domain. A Helicase C-terminal domain is found at K904–S1069.

Functionally, component of antiviral defense system Zorya type I, composed of ZorA, ZorB, ZorC and ZorD. Expression of Zorya type I in E.coli (strain MG1655) confers 10,000-fold resistance to phage SECphi27, 100-fold resistance to lambda, and 10-fold resistance to T7. While most T7 infected Zorya-containing cells undergo abortive infection, a minority produce viable phage progeny. These eventually accumulate to a high multiplicity of infection, leading to culture collapse by 2 hours after initial infection. ZorA and ZorB probably assemble in the cell inner membrane and exert their effect there. This may have ATPase activity. The polypeptide is Zorya protein ZorD (Escherichia coli O139:H28 (strain E24377A / ETEC)).